The chain runs to 505 residues: MIPKVSKIIPWIKDNKKFLKKTYKGIERESLRIDIDGNISKKPHPIIFGSPLTHNWITTDFSESLLELITPVSNSKKYTINFLNDLHIFIIKNLINENLWPMSMPCKINNDSSIIIAQYGNSKLGRTKTIYRNGLKNRYGAKMQIISGVHYNFSFHKDFWKKYNNFYKIQDKFSSIGYFNLIRNYYRFGWIIPYFFGASPIAHSSFFKGLNTDLIFKKNKFGDIYLPFSTSLRLSEIGYINKVQKKIKLKFNNIEEYVDIVKKAMKTPYLNYKKIELKNNEKNLQINVNLLQKENELYSHVRPKRSLNKNKYKLEDLIYKGIEYIEIRSLDVNPFSPIGIKINQIYFLDIFLIWCILIESPKINDEELRSINENWNRVILYGRNPKIKLINFFKKKEKKLSEILKFILNDLQILVESLAFKKNNKIYQKIFFDLHKMTDNPNKTLSGKLLEESIEYGVERLGLDMSKSHKINIENKKLKVINYQSLIKEAEKSIKEQIVLEKNET.

The protein belongs to the glutamate--cysteine ligase type 1 family. Type 1 subfamily.

The catalysed reaction is L-cysteine + L-glutamate + ATP = gamma-L-glutamyl-L-cysteine + ADP + phosphate + H(+). The protein operates within sulfur metabolism; glutathione biosynthesis; glutathione from L-cysteine and L-glutamate: step 1/2. The protein is Glutamate--cysteine ligase of Wigglesworthia glossinidia brevipalpis.